Consider the following 210-residue polypeptide: 3-hexulose-6-phosphate synthase 1 (210 aa).

It belongs to the HPS/KGPDC family. HPS subfamily.

It carries out the reaction D-ribulose 5-phosphate + formaldehyde = D-arabino-hex-3-ulose 6-phosphate. It participates in one-carbon metabolism; formaldehyde assimilation via RuMP pathway; D-fructose 6-phosphate from D-ribulose 5-phosphate and formaldehyde: step 1/2. Catalyzes the condensation of ribulose 5-phosphate with formaldehyde to form 3-hexulose 6-phosphate. This is 3-hexulose-6-phosphate synthase 1 from Staphylococcus saprophyticus subsp. saprophyticus (strain ATCC 15305 / DSM 20229 / NCIMB 8711 / NCTC 7292 / S-41).